The primary structure comprises 359 residues: Peroxisome assembly protein 12 (359 aa).

The Peroxisomal matrix portion of the chain corresponds to 1–19 (MAEHGAHITTASVADDQPS). Residues 20–47 (IFEVVAQDSLMTAVRPALQHVVKVLAES) form a helical membrane-spanning segment. Over 48–51 (NPAH) the chain is Cytoplasmic. A helical membrane pass occupies residues 52–76 (YGFFWRWFDEIFTLLDFLLQQHYLS). At 77–109 (RTSASFSEHFYGLKRIVAGSSPQLQRPASAGLP) the chain is on the peroxisomal matrix side. The helical transmembrane segment at 110–139 (KEHLWKSAMFLVLLPYLKVKLEKLASTLRE) threads the bilayer. The Cytoplasmic portion of the chain corresponds to 140–144 (EDEYS). A helical transmembrane segment spans residues 145–183 (IHPPSSHWKRFYRVFLAAYPFVTMTWEGWFLTQQLRYIL). The Peroxisomal matrix segment spans residues 184 to 249 (GKAEHHSPLL…VGGVALSLST (66 aa)). A helical transmembrane segment spans residues 250–277 (GLSVGVFFLQFLDWWYSSENQETIKSLT). Topologically, residues 278–359 (ALPTPPPPVH…HLIKLYSPEN (82 aa)) are cytoplasmic. Positions 304, 307, 325, and 328 each coordinate Zn(2+). The RING-type; degenerate zinc-finger motif lies at 304-343 (CPLCRKARVNDTVLATSGYVFCYRCVFNYVRSHQACPITG).

The protein belongs to the pex2/pex10/pex12 family. As to quaternary structure, component of the PEX2-PEX10-PEX12 retrotranslocation channel, composed of PEX2, PEX10 and PEX12. Interacts with PEX19 via its cytoplasmic domain.

The protein localises to the peroxisome membrane. It functions in the pathway protein modification; protein ubiquitination. Functionally, component of a retrotranslocation channel required for peroxisome organization by mediating export of the PEX5 receptor from peroxisomes to the cytosol, thereby promoting PEX5 recycling. The retrotranslocation channel is composed of PEX2, PEX10 and PEX12; each subunit contributing transmembrane segments that coassemble into an open channel that specifically allows the passage of PEX5 through the peroxisomal membrane. PEX12 also regulates PEX5 recycling by activating the E3 ubiquitin-protein ligase activity of PEX10. When PEX5 recycling is compromised, PEX12 stimulates PEX10-mediated polyubiquitination of PEX5, leading to its subsequent degradation. The protein is Peroxisome assembly protein 12 (Pex12) of Rattus norvegicus (Rat).